A 123-amino-acid polypeptide reads, in one-letter code: Holo-[acyl-carrier-protein] synthase (123 aa).

Residues Asp-8 and Glu-60 each coordinate Mg(2+).

The protein belongs to the P-Pant transferase superfamily. AcpS family. It depends on Mg(2+) as a cofactor.

It is found in the cytoplasm. The enzyme catalyses apo-[ACP] + CoA = holo-[ACP] + adenosine 3',5'-bisphosphate + H(+). In terms of biological role, transfers the 4'-phosphopantetheine moiety from coenzyme A to a Ser of acyl-carrier-protein. In Wolbachia pipientis wMel, this protein is Holo-[acyl-carrier-protein] synthase.